A 662-amino-acid polypeptide reads, in one-letter code: Potassium channel KAT3 (662 aa).

At 1 to 90 the chain is on the cytoplasmic side; it reads MSTTTTEARS…HFDRRYRLWE (90 aa). A helical transmembrane segment spans residues 91-111; the sequence is LFLVILVGYSAWASLFELAFE. Residues 112 to 118 are Extracellular-facing; sequence KAAEGAL. The helical transmembrane segment at 119 to 139 threads the bilayer; that stretch reads LTIDLVVDFFFAVDIILTFFV. At 140 to 163 the chain is on the cytoplasmic side; sequence SYLDNTTYLNVTDHKLIAKRYLKS. A helical transmembrane segment spans residues 164–184; sequence VAFVMDVASTLPIQFIYKTIT. At 185–194 the chain is on the extracellular side; that stretch reads GDVGRGQAFG. Residues 195–215 traverse the membrane as a helical; Voltage-sensor segment; it reads FLNLLRLWRLRRVAELFKRLE. The Cytoplasmic portion of the chain corresponds to 216–229; sequence KDAHFNYFVIRVIK. The chain crosses the membrane as a helical span at residues 230–250; it reads LLCVTIFWIHLAGCILYWIAY. Residues 251 to 277 lie on the Extracellular side of the membrane; it reads HYPRPTDTWIGSQVEDFKERSVWLGYT. The segment at residues 278–297 is an intramembrane region (pore-forming); the sequence is YSMYWSIVTLTTVGYGDLHA. The Extracellular portion of the chain corresponds to 298-301; sequence VNSR. A helical membrane pass occupies residues 302–322; the sequence is EKTFNMFYMLFNIGLTSYIIG. Residues 323–662 lie on the Cytoplasmic side of the membrane; that stretch reads IMTNLVVHGA…LRENDHLYIF (340 aa). 406-527 serves as a coordination point for a nucleoside 3',5'-cyclic phosphate; it reads LFKGFPEGLL…MIIANFMTYL (122 aa). Positions 528–558 form a coiled coil; that stretch reads KGLNDELKKEIPFLRDLLDDADAQVQETVQS. Residues 591–662 form the KHA domain; that stretch reads RVIIHGQAPP…LRENDHLYIF (72 aa).

It belongs to the potassium channel family. Plant (TC 1.A.1.4) subfamily. In terms of assembly, the potassium channel is probably composed of a homo- or heterotetrameric complex of pore-forming subunits. May interact with AKT1 and AKT2. Interacts with SLAC1. In terms of tissue distribution, expressed predominantly in root hairs and root endodermis and, at a lower level, in leaf nodes, trichomes, and hydathodes.

Its subcellular location is the membrane. Functionally, probable modulatory (alpha) subunit of inward-rectifying potassium channels. Could mediate potassium uptake from the soil solution by plant roots in association with AKT1. The protein is Potassium channel KAT3 (KAT3) of Arabidopsis thaliana (Mouse-ear cress).